Reading from the N-terminus, the 350-residue chain is Cobalt-precorrin-5B C(1)-methyltransferase (350 aa).

Belongs to the CbiD family.

It carries out the reaction Co-precorrin-5B + S-adenosyl-L-methionine = Co-precorrin-6A + S-adenosyl-L-homocysteine. It participates in cofactor biosynthesis; adenosylcobalamin biosynthesis; cob(II)yrinate a,c-diamide from sirohydrochlorin (anaerobic route): step 6/10. Functionally, catalyzes the methylation of C-1 in cobalt-precorrin-5B to form cobalt-precorrin-6A. This Syntrophotalea carbinolica (strain DSM 2380 / NBRC 103641 / GraBd1) (Pelobacter carbinolicus) protein is Cobalt-precorrin-5B C(1)-methyltransferase.